Consider the following 130-residue polypeptide: Small ribosomal subunit protein uS8 (130 aa).

Belongs to the universal ribosomal protein uS8 family. In terms of assembly, part of the 30S ribosomal subunit. Contacts proteins S5 and S12.

In terms of biological role, one of the primary rRNA binding proteins, it binds directly to 16S rRNA central domain where it helps coordinate assembly of the platform of the 30S subunit. In Coxiella burnetii (strain RSA 331 / Henzerling II), this protein is Small ribosomal subunit protein uS8.